A 650-amino-acid polypeptide reads, in one-letter code: Acetyl-coenzyme A synthetase (650 aa).

CoA is bound by residues 191–194 (RGGR), T311, and N335. ATP-binding positions include 387 to 389 (GEP), 411 to 416 (DTWWQT), D500, and R515. S523 contacts CoA. R526 is a binding site for ATP. Mg(2+)-binding residues include V537, H539, and V542. R584 provides a ligand contact to CoA. K609 is subject to N6-acetyllysine.

Belongs to the ATP-dependent AMP-binding enzyme family. Mg(2+) is required as a cofactor. Post-translationally, acetylated. Deacetylation by the SIR2-homolog deacetylase activates the enzyme.

It catalyses the reaction acetate + ATP + CoA = acetyl-CoA + AMP + diphosphate. Its function is as follows. Catalyzes the conversion of acetate into acetyl-CoA (AcCoA), an essential intermediate at the junction of anabolic and catabolic pathways. AcsA undergoes a two-step reaction. In the first half reaction, AcsA combines acetate with ATP to form acetyl-adenylate (AcAMP) intermediate. In the second half reaction, it can then transfer the acetyl group from AcAMP to the sulfhydryl group of CoA, forming the product AcCoA. This is Acetyl-coenzyme A synthetase from Shewanella oneidensis (strain ATCC 700550 / JCM 31522 / CIP 106686 / LMG 19005 / NCIMB 14063 / MR-1).